Consider the following 546-residue polypeptide: Chaperonin GroEL (546 aa).

ATP contacts are provided by residues 30-33 (TLGP), 87-91 (DGTTT), glycine 414, 477-479 (NAL), and aspartate 493.

It belongs to the chaperonin (HSP60) family. In terms of assembly, forms a cylinder of 14 subunits composed of two heptameric rings stacked back-to-back. Interacts with the co-chaperonin GroES.

It is found in the cytoplasm. It catalyses the reaction ATP + H2O + a folded polypeptide = ADP + phosphate + an unfolded polypeptide.. Its function is as follows. Together with its co-chaperonin GroES, plays an essential role in assisting protein folding. The GroEL-GroES system forms a nano-cage that allows encapsulation of the non-native substrate proteins and provides a physical environment optimized to promote and accelerate protein folding. This is Chaperonin GroEL from Syntrophomonas wolfei subsp. wolfei (strain DSM 2245B / Goettingen).